We begin with the raw amino-acid sequence, 269 residues long: Indole-3-glycerol phosphate synthase (269 aa).

The protein belongs to the TrpC family.

The catalysed reaction is 1-(2-carboxyphenylamino)-1-deoxy-D-ribulose 5-phosphate + H(+) = (1S,2R)-1-C-(indol-3-yl)glycerol 3-phosphate + CO2 + H2O. The protein operates within amino-acid biosynthesis; L-tryptophan biosynthesis; L-tryptophan from chorismate: step 4/5. In Roseiflexus sp. (strain RS-1), this protein is Indole-3-glycerol phosphate synthase.